A 310-amino-acid chain; its full sequence is Tagatose-6-phosphate kinase (310 aa).

It belongs to the carbohydrate kinase PfkB family. LacC subfamily.

The catalysed reaction is D-tagatofuranose 6-phosphate + ATP = D-tagatofuranose 1,6-bisphosphate + ADP + H(+). It functions in the pathway carbohydrate metabolism; D-tagatose 6-phosphate degradation; D-glyceraldehyde 3-phosphate and glycerone phosphate from D-tagatose 6-phosphate: step 1/2. In Staphylococcus aureus (strain MRSA252), this protein is Tagatose-6-phosphate kinase.